The sequence spans 282 residues: Sulfur carrier protein FdhD (282 aa).

The active-site Cysteine persulfide intermediate is the Cys-126. Phe-265 to Arg-270 contacts Mo-bis(molybdopterin guanine dinucleotide).

It belongs to the FdhD family.

The protein localises to the cytoplasm. Functionally, required for formate dehydrogenase (FDH) activity. Acts as a sulfur carrier protein that transfers sulfur from IscS to the molybdenum cofactor prior to its insertion into FDH. The chain is Sulfur carrier protein FdhD from Thermoplasma acidophilum (strain ATCC 25905 / DSM 1728 / JCM 9062 / NBRC 15155 / AMRC-C165).